Consider the following 456-residue polypeptide: Potassium voltage-gated channel subfamily A member 7 (456 aa).

Residues V144–T164 traverse the membrane as a helical segment. N-linked (GlcNAc...) asparagine glycosylation is present at N191. A helical membrane pass occupies residues F209–L229. A lipid anchor (S-palmitoyl cysteine) is attached at C231. The helical transmembrane segment at V241 to L261 threads the bilayer. A helical; Voltage-sensor transmembrane segment spans residues I276–S295. The chain crosses the membrane as a helical span at residues L312–F332. Residues T358–D363 carry the Selectivity filter motif. The helical transmembrane segment at I373–I393 threads the bilayer.

This sequence belongs to the potassium channel family. A (Shaker) (TC 1.A.1.2) subfamily. Kv1.7/KCNA7 sub-subfamily. Heterotetramer of potassium channel proteins. In terms of tissue distribution, highly expressed in skeletal muscle, heart and kidney.

It is found in the membrane. It catalyses the reaction K(+)(in) = K(+)(out). In terms of biological role, mediates the voltage-dependent potassium ion permeability of excitable membranes. Assuming opened or closed conformations in response to the voltage difference across the membrane, the protein forms a potassium-selective channel through which potassium ions may pass in accordance with their electrochemical gradient. In Homo sapiens (Human), this protein is Potassium voltage-gated channel subfamily A member 7 (KCNA7).